The chain runs to 212 residues: RNA chaperone ProQ (212 aa).

Residues 107-153 (QDKAKAKRVAQAKSANPAAKTAKKPVKKPVAKRPKQTQSSKPAKEPV) form a disordered region. Over residues 117 to 126 (QAKSANPAAK) the composition is skewed to low complexity. Over residues 127–141 (TAKKPVKKPVAKRPK) the composition is skewed to basic residues.

It belongs to the ProQ family.

The protein resides in the cytoplasm. Its function is as follows. RNA chaperone with significant RNA binding, RNA strand exchange and RNA duplexing activities. The chain is RNA chaperone ProQ from Shewanella halifaxensis (strain HAW-EB4).